A 457-amino-acid polypeptide reads, in one-letter code: UDP-N-acetylmuramate--L-alanine ligase (457 aa).

Residue 109-115 participates in ATP binding; the sequence is GTDGKTT.

It belongs to the MurCDEF family.

Its subcellular location is the cytoplasm. It catalyses the reaction UDP-N-acetyl-alpha-D-muramate + L-alanine + ATP = UDP-N-acetyl-alpha-D-muramoyl-L-alanine + ADP + phosphate + H(+). The protein operates within cell wall biogenesis; peptidoglycan biosynthesis. Cell wall formation. This is UDP-N-acetylmuramate--L-alanine ligase from Thermotoga neapolitana (strain ATCC 49049 / DSM 4359 / NBRC 107923 / NS-E).